The primary structure comprises 161 residues: 2-C-methyl-D-erythritol 2,4-cyclodiphosphate synthase (161 aa).

The a divalent metal cation site is built by aspartate 10 and histidine 12. 4-CDP-2-C-methyl-D-erythritol 2-phosphate-binding positions include 10 to 12 and 36 to 37; these read DVH and HS. Histidine 44 contributes to the a divalent metal cation binding site. Residues 58–60, 63–67, and arginine 144 contribute to the 4-CDP-2-C-methyl-D-erythritol 2-phosphate site; these read DIG and FSDTD.

Belongs to the IspF family. As to quaternary structure, homotrimer. The cofactor is a divalent metal cation.

The enzyme catalyses 4-CDP-2-C-methyl-D-erythritol 2-phosphate = 2-C-methyl-D-erythritol 2,4-cyclic diphosphate + CMP. Its pathway is isoprenoid biosynthesis; isopentenyl diphosphate biosynthesis via DXP pathway; isopentenyl diphosphate from 1-deoxy-D-xylulose 5-phosphate: step 4/6. Its function is as follows. Involved in the biosynthesis of isopentenyl diphosphate (IPP) and dimethylallyl diphosphate (DMAPP), two major building blocks of isoprenoid compounds. Catalyzes the conversion of 4-diphosphocytidyl-2-C-methyl-D-erythritol 2-phosphate (CDP-ME2P) to 2-C-methyl-D-erythritol 2,4-cyclodiphosphate (ME-CPP) with a corresponding release of cytidine 5-monophosphate (CMP). The sequence is that of 2-C-methyl-D-erythritol 2,4-cyclodiphosphate synthase from Burkholderia ambifaria (strain MC40-6).